Reading from the N-terminus, the 115-residue chain is MNIIKKIELEQMRLDIPKFKSGDSVKVHMRIVEGEKERIQVFHGNVIRISRGTTNATFTVRKISNGVGVERVFPMHSPFIDRIEVVQQGRVRRSRLYYLRNLKGKAARIKPLKTW.

This sequence belongs to the bacterial ribosomal protein bL19 family.

In terms of biological role, this protein is located at the 30S-50S ribosomal subunit interface and may play a role in the structure and function of the aminoacyl-tRNA binding site. The protein is Large ribosomal subunit protein bL19 of Oleidesulfovibrio alaskensis (strain ATCC BAA-1058 / DSM 17464 / G20) (Desulfovibrio alaskensis).